The chain runs to 226 residues: Large ribosomal subunit protein uL3 (226 aa).

A disordered region spans residues 135-158 (MSSQRASHGNSRSHNVPGSIGMAQ). Polar residues predominate over residues 137 to 150 (SQRASHGNSRSHNV). Q158 bears the N5-methylglutamine mark.

It belongs to the universal ribosomal protein uL3 family. In terms of assembly, part of the 50S ribosomal subunit. Forms a cluster with proteins L14 and L19. In terms of processing, methylated by PrmB.

Its function is as follows. One of the primary rRNA binding proteins, it binds directly near the 3'-end of the 23S rRNA, where it nucleates assembly of the 50S subunit. This is Large ribosomal subunit protein uL3 from Polaromonas naphthalenivorans (strain CJ2).